The primary structure comprises 127 residues: Protein ApaG (127 aa).

An ApaG domain is found at 2–127 (SELVEHIQVH…FRLAGPNQVH (126 aa)).

This Chromohalobacter salexigens (strain ATCC BAA-138 / DSM 3043 / CIP 106854 / NCIMB 13768 / 1H11) protein is Protein ApaG.